Consider the following 453-residue polypeptide: UDP-N-acetylmuramoylalanine--D-glutamate ligase (453 aa).

120–126 provides a ligand contact to ATP; that stretch reads GSNGKST.

The protein belongs to the MurCDEF family.

It is found in the cytoplasm. The enzyme catalyses UDP-N-acetyl-alpha-D-muramoyl-L-alanine + D-glutamate + ATP = UDP-N-acetyl-alpha-D-muramoyl-L-alanyl-D-glutamate + ADP + phosphate + H(+). It functions in the pathway cell wall biogenesis; peptidoglycan biosynthesis. Functionally, cell wall formation. Catalyzes the addition of glutamate to the nucleotide precursor UDP-N-acetylmuramoyl-L-alanine (UMA). In Teredinibacter turnerae (strain ATCC 39867 / T7901), this protein is UDP-N-acetylmuramoylalanine--D-glutamate ligase.